Consider the following 305-residue polypeptide: Heme A synthase (305 aa).

Residues 1–6 (MKKFLK) lie on the Cytoplasmic side of the membrane. A helical transmembrane segment spans residues 7–27 (VWSVLTIICMTVVVFGGALVT). The Extracellular portion of the chain corresponds to 28–63 (KTGSADGCGNSWPLCNGQLVRLTDVTPEKLIEFMHR). A disulfide bridge connects residues cysteine 35 and cysteine 42. The active site involves glutamate 59. Residue histidine 62 participates in heme o binding. Residues 64 to 84 (MTTGISSIFVIVLAICAWIYM) form a helical membrane-spanning segment. Topologically, residues 85–92 (KNRRETKP) are cytoplasmic. The helical transmembrane segment at 93 to 113 (LAIIAVLFLIIQALMGMAAVV) threads the bilayer. The Extracellular segment spans residues 114 to 122 (WGQNPYIMA). A helical membrane pass occupies residues 123–143 (LHFGISIICYASIVLLALMIF). Residue histidine 124 participates in heme o binding. At 144–160 (EVDRKFDARNLVMGTKL) the chain is on the cytoplasmic side. Residues 161-181 (RVNIYALTIYTYLAVYTGALV) traverse the membrane as a helical segment. The Extracellular segment spans residues 182 to 212 (RHEKASMAVPVWPFENGHFIMPTSVQDYVQY). A helical membrane pass occupies residues 213–233 (FHRLAAFILIVWLLYVTWLVF). Histidine 214 serves as a coordination point for heme b. The Cytoplasmic segment spans residues 234 to 240 (RDYRRYR). The chain crosses the membrane as a helical span at residues 241–261 (VLTFSMVLSLVFIALQAVTGA). Residues 262–271 (LSVYTGVNLY) lie on the Extracellular side of the membrane. The helical transmembrane segment at 272 to 292 (IALAHSLIITMLFALLCYLCL) threads the bilayer. Histidine 276 is a binding site for heme b. Residues 293 to 305 (LASRSKSNRLRIK) lie on the Cytoplasmic side of the membrane.

This sequence belongs to the COX15/CtaA family. Type 1 subfamily. As to quaternary structure, interacts with CtaB. Heme b serves as cofactor.

The protein resides in the cell membrane. The catalysed reaction is Fe(II)-heme o + 2 A + H2O = Fe(II)-heme a + 2 AH2. It participates in porphyrin-containing compound metabolism; heme A biosynthesis; heme A from heme O: step 1/1. Functionally, catalyzes the conversion of heme O to heme A by two successive hydroxylations of the methyl group at C8. The first hydroxylation forms heme I, the second hydroxylation results in an unstable dihydroxymethyl group, which spontaneously dehydrates, resulting in the formyl group of heme A. This chain is Heme A synthase, found in Listeria monocytogenes serovar 1/2a (strain ATCC BAA-679 / EGD-e).